The chain runs to 325 residues: 4-hydroxy-3-methylbut-2-enyl diphosphate reductase (325 aa).

C21 contacts [4Fe-4S] cluster. H50 and H83 together coordinate (2E)-4-hydroxy-3-methylbut-2-enyl diphosphate. 2 residues coordinate dimethylallyl diphosphate: H50 and H83. The isopentenyl diphosphate site is built by H50 and H83. C105 is a binding site for [4Fe-4S] cluster. H133 contributes to the (2E)-4-hydroxy-3-methylbut-2-enyl diphosphate binding site. H133 contacts dimethylallyl diphosphate. H133 serves as a coordination point for isopentenyl diphosphate. E135 acts as the Proton donor in catalysis. T173 lines the (2E)-4-hydroxy-3-methylbut-2-enyl diphosphate pocket. C203 is a [4Fe-4S] cluster binding site. (2E)-4-hydroxy-3-methylbut-2-enyl diphosphate is bound by residues S231, S232, N233, and S275. Residues S231, S232, N233, and S275 each coordinate dimethylallyl diphosphate. Isopentenyl diphosphate contacts are provided by S231, S232, N233, and S275.

Belongs to the IspH family. It depends on [4Fe-4S] cluster as a cofactor.

The catalysed reaction is isopentenyl diphosphate + 2 oxidized [2Fe-2S]-[ferredoxin] + H2O = (2E)-4-hydroxy-3-methylbut-2-enyl diphosphate + 2 reduced [2Fe-2S]-[ferredoxin] + 2 H(+). It carries out the reaction dimethylallyl diphosphate + 2 oxidized [2Fe-2S]-[ferredoxin] + H2O = (2E)-4-hydroxy-3-methylbut-2-enyl diphosphate + 2 reduced [2Fe-2S]-[ferredoxin] + 2 H(+). Its pathway is isoprenoid biosynthesis; dimethylallyl diphosphate biosynthesis; dimethylallyl diphosphate from (2E)-4-hydroxy-3-methylbutenyl diphosphate: step 1/1. The protein operates within isoprenoid biosynthesis; isopentenyl diphosphate biosynthesis via DXP pathway; isopentenyl diphosphate from 1-deoxy-D-xylulose 5-phosphate: step 6/6. Catalyzes the conversion of 1-hydroxy-2-methyl-2-(E)-butenyl 4-diphosphate (HMBPP) into a mixture of isopentenyl diphosphate (IPP) and dimethylallyl diphosphate (DMAPP). Acts in the terminal step of the DOXP/MEP pathway for isoprenoid precursor biosynthesis. The chain is 4-hydroxy-3-methylbut-2-enyl diphosphate reductase from Bordetella pertussis (strain Tohama I / ATCC BAA-589 / NCTC 13251).